Reading from the N-terminus, the 270-residue chain is Myelin protein zero-like protein 1 (270 aa).

Residues 1–35 form the signal peptide; it reads MAEAVGAVTLIAAPARRRWLWSALAAMLGLLTARI. An Ig-like V-type domain is found at 36–151; the sequence is SALEVHTPKE…DIVVRPGQIR (116 aa). Topologically, residues 36 to 162 are extracellular; that stretch reads SALEVHTPKE…HVVEIDNLLV (127 aa). N50 and N130 each carry an N-linked (GlcNAc...) asparagine glycan. Residues C58 and C135 are joined by a disulfide bond. Residues 163–183 traverse the membrane as a helical segment; that stretch reads FLVWVVVGTVTAVVLGLTLLI. Over 184-270 the chain is Cytoplasmic; the sequence is SLVLVVLYRR…SVVYADIRKD (87 aa). The tract at residues 201-257 is disordered; the sequence is TGCSTSERLSPVKQAPRKCPSDTEGLVKSPPSAGSHQGPVIYAQLDHSGGHHSGKIN. Residues S204, S206, S210, and S221 each carry the phosphoserine modification. Residues 240–245 carry the ITIM motif 1 motif; that stretch reads VIYAQL. At Y242 the chain carries Phosphotyrosine. S261 bears the Phosphoserine mark. The short motif at 262–267 is the ITIM motif 2 element; that stretch reads VVYADI. Position 264 is a phosphotyrosine (Y264).

It belongs to the myelin P0 protein family. As to quaternary structure, interacts with phosphorylated PTPN11/SHP-2. Post-translationally, phosphorylated on tyrosine residues upon stimulation with pervanadate and concanavalin-A (ConA). Phosphorylation at Tyr-242 and Tyr-264 is required for interaction with PTPN11/SHP-2. Dephosphorylated by PTPN11/SHP-2 (in vitro). In terms of processing, N-glycosylated.

It is found in the membrane. In terms of biological role, cell surface receptor, which is involved in signal transduction processes. Recruits PTPN11/SHP-2 to the cell membrane and is a putative substrate of PTPN11/SHP-2. Is a major receptor for concanavalin-A (ConA) and is involved in cellular signaling induced by ConA, which probably includes Src family tyrosine-protein kinases. May be involved in regulation of integrin-mediated cell motility. This Rattus norvegicus (Rat) protein is Myelin protein zero-like protein 1 (Mpzl1).